The chain runs to 218 residues: Imidazole glycerol phosphate synthase subunit HisH (218 aa).

Residues Ser-12–Gln-218 enclose the Glutamine amidotransferase type-1 domain. Cys-88 serves as the catalytic Nucleophile. Catalysis depends on residues His-196 and Glu-198.

Heterodimer of HisH and HisF.

The protein resides in the cytoplasm. The catalysed reaction is 5-[(5-phospho-1-deoxy-D-ribulos-1-ylimino)methylamino]-1-(5-phospho-beta-D-ribosyl)imidazole-4-carboxamide + L-glutamine = D-erythro-1-(imidazol-4-yl)glycerol 3-phosphate + 5-amino-1-(5-phospho-beta-D-ribosyl)imidazole-4-carboxamide + L-glutamate + H(+). It carries out the reaction L-glutamine + H2O = L-glutamate + NH4(+). The protein operates within amino-acid biosynthesis; L-histidine biosynthesis; L-histidine from 5-phospho-alpha-D-ribose 1-diphosphate: step 5/9. IGPS catalyzes the conversion of PRFAR and glutamine to IGP, AICAR and glutamate. The HisH subunit catalyzes the hydrolysis of glutamine to glutamate and ammonia as part of the synthesis of IGP and AICAR. The resulting ammonia molecule is channeled to the active site of HisF. This chain is Imidazole glycerol phosphate synthase subunit HisH, found in Halobacterium salinarum (strain ATCC 700922 / JCM 11081 / NRC-1) (Halobacterium halobium).